The primary structure comprises 409 residues: uncharacterized protein (409 aa).

The HTH arsR-type domain maps to 305-409 (LTKIDEKVVK…LIGEDDELEM (105 aa)).

This is an uncharacterized protein from Methanocaldococcus jannaschii (strain ATCC 43067 / DSM 2661 / JAL-1 / JCM 10045 / NBRC 100440) (Methanococcus jannaschii).